The primary structure comprises 332 residues: RNA polymerase principal sigma factor HrdD (332 aa).

Positions 1 to 25 (MATRAVARRQSATGETADSASSVRA) are disordered. The span at 10–22 (QSATGETADSASS) shows a compositional bias: polar residues. The Polymerase core binding motif lies at 124-137 (DLIQEGNAGLVRAV). A DNA-binding region (H-T-H motif) is located at residues 294-313 (LTEVGKEHGLTRERIRQIEK).

This sequence belongs to the sigma-70 factor family.

Functionally, sigma factors are initiation factors that promote the attachment of RNA polymerase to specific initiation sites and are then released. This is RNA polymerase principal sigma factor HrdD (hrdD) from Streptomyces viridifaciens.